The chain runs to 515 residues: MTEPTRAQAATPTTEGLAVDENKIIAERREKLQALRQQGVAFPNDFQPTHQAGALHAQYGETDQATLEASPVEVSIAGRMMLKRVMGKASFATVQDGSGQIQFYITRDKVGEDVYAAFKHWDLGDIISARGELFRTNKGELSVQVRELRLLSKALRPLPDKFHGLADQETKYRQRYVDLIVSPETRSTFRARTQAISSIRRHMADAGFMEVETPMLHPIPGGAAAKPFITHHNALDMQMFMRIAPELYLKRLIVGGFERVFEINRNFRNEGVSPRHNPEFTMMEFYAAYTDYRWLMDFTENLIRQAAIDARGSATVTYQGRELDLSKPFHRLTICGAIQKYAPEYTDAQLADADFLRAELKNKFKINTSAPQFLNAGLGTLQLVLFEETAEAQLWEPTYIVDYPVEVSPLARGSDTQPGITERFELFITGREIANGFSELNDPEDQAERFRKQVEQKDAGDEEAMYFDADYIRALEYGMPPTGGCGIGIDRLVMLLTDSPNIRDVILFPHLRRED.

Positions 425 and 432 each coordinate Mg(2+).

Belongs to the class-II aminoacyl-tRNA synthetase family. Homodimer. Requires Mg(2+) as cofactor.

The protein resides in the cytoplasm. It carries out the reaction tRNA(Lys) + L-lysine + ATP = L-lysyl-tRNA(Lys) + AMP + diphosphate. The sequence is that of Lysine--tRNA ligase from Cupriavidus metallidurans (strain ATCC 43123 / DSM 2839 / NBRC 102507 / CH34) (Ralstonia metallidurans).